Here is a 429-residue protein sequence, read N- to C-terminus: MTYSPVVESVEAQAFAVTDLSPAAEFKTADFDTYVMNTYGRFPIAIARGQGSTLWDTEGKSYLDFVAGIATCTLGHAHPALVRAVSDQIQKLHHVSNLYYIPEQGELAKWIVEHSCADRVFFCNSGAEANEAAIKLVRKYAHTVLDFLEQPVILTAKASFHGRTLATITATGQPKYQQYFDPLVPGFDYVPYNDIRSLENKVADLDEGNSRVAAIFLEPLQGEGGVRPGDLAYFKRVREICDQNDILLVFDEVQVGVGRTGKLWGYEHLGVEPDIFTSAKGLAGGVPIGAMMCKKFCDVFEPGNHASTFGGNPLACAAGLAVLKTIEGDRLLDNVQARGEQLRSGLAEIKNQYPTLFTEVRGWGLINGLEISAESSLTSVEIVKAAMEQGLLLAPAGPKVLRFVPPLVVTEAEIAQAVEILRQAIATLV.

Pyridoxal 5'-phosphate-binding positions include 126–127 and F160; that span reads GA. R163 is a N(2)-acetyl-L-ornithine binding site. 251–254 is a pyridoxal 5'-phosphate binding site; the sequence is DEVQ. K280 is modified (N6-(pyridoxal phosphate)lysine). Residue S307 coordinates N(2)-acetyl-L-ornithine. T308 contacts pyridoxal 5'-phosphate.

It belongs to the class-III pyridoxal-phosphate-dependent aminotransferase family. ArgD subfamily. As to quaternary structure, homodimer. Pyridoxal 5'-phosphate serves as cofactor.

It is found in the cytoplasm. The catalysed reaction is N(2)-acetyl-L-ornithine + 2-oxoglutarate = N-acetyl-L-glutamate 5-semialdehyde + L-glutamate. It functions in the pathway amino-acid biosynthesis; L-arginine biosynthesis; N(2)-acetyl-L-ornithine from L-glutamate: step 4/4. N-acetylornithine aminotransferase activity is stimulated by the addition of Mg(2+), Ca(2+) or Mn(2+), and inhibited by the addition of Zn(2+), Cu(2+), Co(2+) or Ni(2+). Catalyzes the reversible conversion of N-acetylornithine to N-acetylglutamate-5-semialdehyde. In vitro, also shows very low ornithine aminotransferase (OAT) and gamma-aminobutyrate aminotransferase (GABA-AT) activity, catalyzing the conversion of ornithine (Orn) to glutamate-5-semialdehyde and of gamma-aminobutyric acid (GABA) to succinate semialdehyde. It has been shown to function as a GABA-AT and contributes to closing the tricarboxylic acid cycle of Synechocystis sp. PCC6803 via the GABA shunt. However, the catalytic efficiency toward N-acetylornithine is 2500-fold and 10700-fold higher than that toward ornithine and gamma-aminobutyrate, respectively, indicating that the protein mainly functions as an N-acetylornithine aminotransferase. In Synechocystis sp. (strain ATCC 27184 / PCC 6803 / Kazusa), this protein is Acetylornithine aminotransferase.